Reading from the N-terminus, the 277-residue chain is Probable redox regulatory protein ML2435 (277 aa).

This sequence belongs to the Rv0495c family.

Functionally, essential for maintaining intracellular redox homeostasis. The protein is Probable redox regulatory protein ML2435 of Mycobacterium leprae (strain TN).